We begin with the raw amino-acid sequence, 337 residues long: Diacylglycerol O-acyltransferase 2-like protein 6 (337 aa).

A run of 2 helical transmembrane segments spans residues 22-42 and 102-122; these read IPVY…FLLF and YIIA…NFAT.

Belongs to the diacylglycerol acyltransferase family. Expressed in all tissues tested except pancreas.

Its subcellular location is the endoplasmic reticulum membrane. It catalyses the reaction 1,2-di-(9Z-octadecenoyl)-sn-glycerol + (9Z)-octadecenoyl-CoA = 1,2,3-tri-(9Z-octadecenoyl)-glycerol + CoA. It carries out the reaction 1-O-(9Z-octadecenyl)-glycerol + (9Z)-octadecenoyl-CoA = 1-O-(9Z-octadecyl)-3-(9Z-octadecenoyl)-glycerol + CoA. The catalysed reaction is 1-(9Z-octadecenoyl)-glycerol + (9Z)-octadecenoyl-CoA = 1,2-di-(9Z-octadecenoyl)-glycerol + CoA. Its function is as follows. Diglyceride acyltransferase that uses fatty acyl-CoA as substrate. Particularly active with oleate as a substrate. Has no wax synthase activity to produce wax esters. Able to use 1-monoalkylglycerol (1-MAkG) as an acyl acceptor for the synthesis of monoalkyl-monoacylglycerol (MAMAG). The chain is Diacylglycerol O-acyltransferase 2-like protein 6 from Homo sapiens (Human).